Reading from the N-terminus, the 385-residue chain is GTPase Obg (385 aa).

Positions 1–159 (MHFIDQAEIE…RRLRLELKLI (159 aa)) constitute an Obg domain. The region spanning 160 to 328 (AEVGIVGMPN…LLQRVWQCLG (169 aa)) is the OBG-type G domain. GTP contacts are provided by residues 166–173 (GMPNAGKS), 191–195 (FTTLQ), 213–216 (DIPG), 280–283 (NKID), and 309–311 (SAV). Positions 173 and 193 each coordinate Mg(2+).

Belongs to the TRAFAC class OBG-HflX-like GTPase superfamily. OBG GTPase family. As to quaternary structure, monomer. Requires Mg(2+) as cofactor.

The protein localises to the cytoplasm. In terms of biological role, an essential GTPase which binds GTP, GDP and possibly (p)ppGpp with moderate affinity, with high nucleotide exchange rates and a fairly low GTP hydrolysis rate. Plays a role in control of the cell cycle, stress response, ribosome biogenesis and in those bacteria that undergo differentiation, in morphogenesis control. The polypeptide is GTPase Obg (Synechococcus sp. (strain JA-3-3Ab) (Cyanobacteria bacterium Yellowstone A-Prime)).